The chain runs to 385 residues: 8-amino-7-oxononanoate synthase (385 aa).

R23 contributes to the substrate binding site. Pyridoxal 5'-phosphate is bound at residue 110-111 (GF). Residue H135 coordinates substrate. Pyridoxal 5'-phosphate-binding residues include S180, H208, and T234. Residue K237 is modified to N6-(pyridoxal phosphate)lysine. T350 is a binding site for substrate.

The protein belongs to the class-II pyridoxal-phosphate-dependent aminotransferase family. BioF subfamily. As to quaternary structure, homodimer. It depends on pyridoxal 5'-phosphate as a cofactor.

The enzyme catalyses 6-carboxyhexanoyl-[ACP] + L-alanine + H(+) = (8S)-8-amino-7-oxononanoate + holo-[ACP] + CO2. Its pathway is cofactor biosynthesis; biotin biosynthesis. In terms of biological role, catalyzes the decarboxylative condensation of pimeloyl-[acyl-carrier protein] and L-alanine to produce 8-amino-7-oxononanoate (AON), [acyl-carrier protein], and carbon dioxide. This chain is 8-amino-7-oxononanoate synthase, found in Vibrio vulnificus (strain YJ016).